The sequence spans 401 residues: Riboflavin biosynthesis protein RibBA (401 aa).

The tract at residues 1–203 (MTDFQFSKVE…IQQLQEYRRK (203 aa)) is DHBP synthase. D-ribulose 5-phosphate-binding positions include 30–31 (RE), Asp35, 142–146 (RNGHT), and Glu166. Glu31 is a binding site for Mg(2+). Position 145 (His145) interacts with Mg(2+). The segment at 204 to 401 (HDSLVKQISV…QIKMGHMFNF (198 aa)) is GTP cyclohydrolase II. Residue 254 to 258 (RIHSE) coordinates GTP. 3 residues coordinate Zn(2+): Cys259, Cys270, and Cys272. GTP-binding positions include Gln275, 297 to 299 (EGR), and Thr319. Asp331 functions as the Proton acceptor; for GTP cyclohydrolase activity in the catalytic mechanism. The active-site Nucleophile; for GTP cyclohydrolase activity is Arg333. The GTP site is built by Thr354 and Lys359.

This sequence in the N-terminal section; belongs to the DHBP synthase family. The protein in the C-terminal section; belongs to the GTP cyclohydrolase II family. Mg(2+) is required as a cofactor. Mn(2+) serves as cofactor. It depends on Zn(2+) as a cofactor.

The catalysed reaction is D-ribulose 5-phosphate = (2S)-2-hydroxy-3-oxobutyl phosphate + formate + H(+). It carries out the reaction GTP + 4 H2O = 2,5-diamino-6-hydroxy-4-(5-phosphoribosylamino)-pyrimidine + formate + 2 phosphate + 3 H(+). It functions in the pathway cofactor biosynthesis; riboflavin biosynthesis; 2-hydroxy-3-oxobutyl phosphate from D-ribulose 5-phosphate: step 1/1. The protein operates within cofactor biosynthesis; riboflavin biosynthesis; 5-amino-6-(D-ribitylamino)uracil from GTP: step 1/4. Its function is as follows. Catalyzes the conversion of D-ribulose 5-phosphate to formate and 3,4-dihydroxy-2-butanone 4-phosphate. Functionally, catalyzes the conversion of GTP to 2,5-diamino-6-ribosylamino-4(3H)-pyrimidinone 5'-phosphate (DARP), formate and pyrophosphate. In Actinobacillus pleuropneumoniae serotype 3 (strain JL03), this protein is Riboflavin biosynthesis protein RibBA.